Reading from the N-terminus, the 437-residue chain is Phosphoethanolamine N-methyltransferase 2 (437 aa).

N-methylethanolamine phosphate is bound by residues 186–187 (QY) and Tyr-195. Residues 204–205 (IS), Gly-232, Asp-254, 281–282 (DA), and Arg-298 contribute to the S-adenosyl-L-homocysteine site. Residues Tyr-329, Tyr-343, 347–349 (RAY), and Lys-415 each bind N-methylethanolamine phosphate.

The protein belongs to the class I-like SAM-binding methyltransferase superfamily.

The catalysed reaction is N-methylethanolamine phosphate + S-adenosyl-L-methionine = N,N-dimethylethanolamine phosphate + S-adenosyl-L-homocysteine + H(+). It catalyses the reaction N,N-dimethylethanolamine phosphate + S-adenosyl-L-methionine = phosphocholine + S-adenosyl-L-homocysteine + H(+). Its pathway is phospholipid metabolism; phosphatidylcholine biosynthesis; phosphocholine from phosphoethanolamine. With respect to regulation, feedback inhibition by phosphatidylcholine and also by S-adenosylhomocysteine. Functionally, catalyzes the last two methylation reactions in the synthesis of phosphocholine, by converting phospho-monomethylethanolamine (N-methylethanolamine phosphate) into phospho-dimethylethanolamine (N,N-dimethylethanolamine phosphate) and the latter into phosphocholine. Phosphocholine is a precursor for phosphatidylcholine, a major component in membranes and a precursor itself in the production of glycoconjugates secreted by parasitic nematodes to avoid host immune responses. The protein is Phosphoethanolamine N-methyltransferase 2 of Caenorhabditis elegans.